Here is a 320-residue protein sequence, read N- to C-terminus: NAD kinase (320 aa).

Catalysis depends on Asp96, which acts as the Proton acceptor. Residues 96–97 (DG), Arg101, 170–171 (NE), Asp200, and 211–216 (TAYAFS) each bind NAD(+).

It belongs to the NAD kinase family. A divalent metal cation is required as a cofactor.

The protein localises to the cytoplasm. It catalyses the reaction NAD(+) + ATP = ADP + NADP(+) + H(+). Functionally, involved in the regulation of the intracellular balance of NAD and NADP, and is a key enzyme in the biosynthesis of NADP. Catalyzes specifically the phosphorylation on 2'-hydroxyl of the adenosine moiety of NAD to yield NADP. This Rhodococcus opacus (strain B4) protein is NAD kinase.